The sequence spans 440 residues: Chromosomal replication initiator protein DnaA (440 aa).

A domain I, interacts with DnaA modulators region spans residues 1–75 (MNPNQILENL…QSGNKASVLI (75 aa)). The domain II stretch occupies residues 75 to 99 (IQAQSAKQSSKSTKIDIAHIKAQST). Residues 100-316 (ILNPSFTFES…GIIISLNAYA (217 aa)) form a domain III, AAA+ region region. 4 residues coordinate ATP: Gly146, Gly148, Lys149, and Thr150. The tract at residues 317 to 440 (TILGQEITLE…KNKILVKSQS (124 aa)) is domain IV, binds dsDNA.

Belongs to the DnaA family. Oligomerizes as a right-handed, spiral filament on DNA at oriC.

It localises to the cytoplasm. In terms of biological role, plays an essential role in the initiation and regulation of chromosomal replication. ATP-DnaA binds to the origin of replication (oriC) to initiate formation of the DNA replication initiation complex once per cell cycle. Binds the DnaA box (a 9 base pair repeat at the origin) and separates the double-stranded (ds)DNA. Forms a right-handed helical filament on oriC DNA; dsDNA binds to the exterior of the filament while single-stranded (ss)DNA is stabiized in the filament's interior. The ATP-DnaA-oriC complex binds and stabilizes one strand of the AT-rich DNA unwinding element (DUE), permitting loading of DNA polymerase. After initiation quickly degrades to an ADP-DnaA complex that is not apt for DNA replication. Binds acidic phospholipids. The polypeptide is Chromosomal replication initiator protein DnaA (Campylobacter jejuni subsp. jejuni serotype O:6 (strain 81116 / NCTC 11828)).